Consider the following 157-residue polypeptide: Protein Smg homolog (157 aa).

This sequence belongs to the Smg family.

This chain is Protein Smg homolog, found in Shewanella pealeana (strain ATCC 700345 / ANG-SQ1).